Consider the following 78-residue polypeptide: Acyl carrier protein (78 aa).

Positions 2–77 constitute a Carrier domain; the sequence is STIEERVKKI…AAIDYINGHQ (76 aa). O-(pantetheine 4'-phosphoryl)serine is present on serine 37.

It belongs to the acyl carrier protein (ACP) family. 4'-phosphopantetheine is transferred from CoA to a specific serine of apo-ACP by AcpS. This modification is essential for activity because fatty acids are bound in thioester linkage to the sulfhydryl of the prosthetic group.

Its subcellular location is the cytoplasm. It participates in lipid metabolism; fatty acid biosynthesis. Functionally, carrier of the growing fatty acid chain in fatty acid biosynthesis. This Erwinia tasmaniensis (strain DSM 17950 / CFBP 7177 / CIP 109463 / NCPPB 4357 / Et1/99) protein is Acyl carrier protein.